The chain runs to 319 residues: Telomere-binding protein cav (319 aa).

The interval R107–E312 is required for binding to Su(var)205. Disordered regions lie at residues W141–V163 and P186–Y248. Short sequence motifs (su(var)205-binding Pro-containing repeat) lie at residues P220–M224 and P273–E279. A compositionally biased stretch (polar residues) spans S291 to S311. The interval S291 to N319 is disordered.

Interacts (via C-terminus) with Su(var)205 dimer (via hinge and chromoshadow domain) and with moi to form the terminin, telomere-capping, complex. Interacts with HP6, which is also part of the terminin complex.

The protein resides in the nucleus. The protein localises to the chromosome. Its subcellular location is the telomere. Functionally, binds to chromosome ends in a sequence-dependent manner and is required for telomere capping. The polypeptide is Telomere-binding protein cav (Drosophila yakuba (Fruit fly)).